The sequence spans 456 residues: Bifunctional protein GlmU (456 aa).

The segment at 1 to 228 is pyrophosphorylase; the sequence is MTLPLHVLIL…PQDVEGANDP (228 aa). UDP-N-acetyl-alpha-D-glucosamine-binding positions include 10–13, Lys24, Gln76, 81–82, 103–105, Gly138, Glu153, Asn168, and Asn226; these read LAAG, GT, and YGD. A Mg(2+)-binding site is contributed by Asp105. Residue Asn226 coordinates Mg(2+). The linker stretch occupies residues 229–249; sequence WQLAQLERAWQLRAARTLCLQ. Positions 250–456 are N-acetyltransferase; the sequence is GVRMADPARV…GWKRPTKKSP (207 aa). 2 residues coordinate UDP-N-acetyl-alpha-D-glucosamine: Arg332 and Lys350. The Proton acceptor role is filled by His362. UDP-N-acetyl-alpha-D-glucosamine contacts are provided by Tyr365 and Asn376. Residues Ala379, 385-386, Ser404, Ala422, and Arg439 contribute to the acetyl-CoA site; that span reads NY.

This sequence in the N-terminal section; belongs to the N-acetylglucosamine-1-phosphate uridyltransferase family. In the C-terminal section; belongs to the transferase hexapeptide repeat family. As to quaternary structure, homotrimer. Mg(2+) serves as cofactor.

It is found in the cytoplasm. The catalysed reaction is alpha-D-glucosamine 1-phosphate + acetyl-CoA = N-acetyl-alpha-D-glucosamine 1-phosphate + CoA + H(+). It carries out the reaction N-acetyl-alpha-D-glucosamine 1-phosphate + UTP + H(+) = UDP-N-acetyl-alpha-D-glucosamine + diphosphate. The protein operates within nucleotide-sugar biosynthesis; UDP-N-acetyl-alpha-D-glucosamine biosynthesis; N-acetyl-alpha-D-glucosamine 1-phosphate from alpha-D-glucosamine 6-phosphate (route II): step 2/2. It participates in nucleotide-sugar biosynthesis; UDP-N-acetyl-alpha-D-glucosamine biosynthesis; UDP-N-acetyl-alpha-D-glucosamine from N-acetyl-alpha-D-glucosamine 1-phosphate: step 1/1. Its pathway is bacterial outer membrane biogenesis; LPS lipid A biosynthesis. Catalyzes the last two sequential reactions in the de novo biosynthetic pathway for UDP-N-acetylglucosamine (UDP-GlcNAc). The C-terminal domain catalyzes the transfer of acetyl group from acetyl coenzyme A to glucosamine-1-phosphate (GlcN-1-P) to produce N-acetylglucosamine-1-phosphate (GlcNAc-1-P), which is converted into UDP-GlcNAc by the transfer of uridine 5-monophosphate (from uridine 5-triphosphate), a reaction catalyzed by the N-terminal domain. The protein is Bifunctional protein GlmU of Xanthomonas axonopodis pv. citri (strain 306).